The chain runs to 458 residues: Ectonucleotide pyrophosphatase/phosphodiesterase family member 7 (458 aa).

The signal sequence occupies residues 1-21 (MRGPAVLLTVALATLLAPGAG). Topologically, residues 22–433 (APVQSQGSQN…RPTLLPKGRS (412 aa)) are extracellular. Zn(2+) is bound by residues Asp-39 and Thr-75. The segment at 72–78 (VTMTSPC) is required for enzyme activity. Residue Thr-75 is the Nucleophile of the active site. Substrate is bound at residue Asn-96. Residues Asn-100, Asn-121, Asn-146, and Asn-168 are each glycosylated (N-linked (GlcNAc...) asparagine). 4 residues coordinate Zn(2+): Asp-199, His-203, Asp-246, and His-247. N-linked (GlcNAc...) asparagine glycosylation is present at Asn-267. His-353 is a Zn(2+) binding site. The chain crosses the membrane as a helical span at residues 434–454 (ALPPSSRPLLVMGLLGTVILL). Residues 455–458 (SEVA) lie on the Cytoplasmic side of the membrane.

It belongs to the nucleotide pyrophosphatase/phosphodiesterase family. Requires Zn(2+) as cofactor. In terms of processing, N-glycosylated; required for activity and transport to the plasma membrane. In terms of tissue distribution, detected in the colon (at protein level). Expressed in the duodenum, jejunum and liver and at low levels in the ileum. Expression was very low in the esophagus, stomach and colon.

The protein localises to the cell membrane. The catalysed reaction is a sphingomyelin + H2O = phosphocholine + an N-acylsphing-4-enine + H(+). The enzyme catalyses 1-hexadecanoyl-sn-glycero-3-phosphocholine + H2O = 1-hexadecanoyl-sn-glycerol + phosphocholine + H(+). It catalyses the reaction a 1-O-alkyl-2-acetyl-sn-glycero-3-phosphocholine + H2O = a 1-O-alkyl-2-acetyl-sn-glycerol + phosphocholine + H(+). It carries out the reaction 1-O-octadecyl-2-acetyl-sn-glycero-3-phosphocholine + H2O = 1-O-octadecyl-2-acetyl-sn-glycerol + phosphocholine + H(+). Its activity is regulated as follows. Inhibited in a dose dependent manner by ATP, imidazole, orthovanadate and zinc ion. Not inhibited by ADP, AMP and EDTA. Functionally, choline-specific phosphodiesterase that hydrolyzes sphingomyelin releasing the ceramide and phosphocholine and therefore is involved in sphingomyelin digestion, ceramide formation, and fatty acid (FA) absorption in the gastrointestinal tract. Also has phospholipase C activity and can also cleave phosphocholine from palmitoyl lyso-phosphatidylcholine and platelet-activating factor (PAF) leading to its inactivation. Does not have nucleotide pyrophosphatase activity. May promote cholesterol absorption by affecting the levels of sphingomyelin derived from either diet or endogenous sources, in the intestinal lumen. This Homo sapiens (Human) protein is Ectonucleotide pyrophosphatase/phosphodiesterase family member 7.